Reading from the N-terminus, the 288-residue chain is Bifunctional protein FolD 2 (288 aa).

NADP(+) is bound by residues 166-168 (GRS) and S191.

The protein belongs to the tetrahydrofolate dehydrogenase/cyclohydrolase family. Homodimer.

The catalysed reaction is (6R)-5,10-methylene-5,6,7,8-tetrahydrofolate + NADP(+) = (6R)-5,10-methenyltetrahydrofolate + NADPH. It catalyses the reaction (6R)-5,10-methenyltetrahydrofolate + H2O = (6R)-10-formyltetrahydrofolate + H(+). The protein operates within one-carbon metabolism; tetrahydrofolate interconversion. Its function is as follows. Catalyzes the oxidation of 5,10-methylenetetrahydrofolate to 5,10-methenyltetrahydrofolate and then the hydrolysis of 5,10-methenyltetrahydrofolate to 10-formyltetrahydrofolate. In Myxococcus xanthus (strain DK1622), this protein is Bifunctional protein FolD 2.